The sequence spans 155 residues: MKVEIDSFSGAKIYPGRGTLFVRGDSKIFRFQNSKSASLFKQRKNPRRIAWTVLFRKHHKKGITEEVAKKRSRKTVKAQRPITGASLDLIKERRSLKPEVRKANREEKLKANKEKKKAEKAARKAEKAKSAGTQSSKFSKQQAKGAFQKVAATSR.

Phosphoserine is present on S7. The disordered stretch occupies residues 66-155 (EVAKKRSRKT…AFQKVAATSR (90 aa)). Positions 89 to 129 (LIKERRSLKPEVRKANREEKLKANKEKKKAEKAARKAEKAK) are enriched in basic and acidic residues. Residues 131–142 (AGTQSSKFSKQQ) are compositionally biased toward polar residues.

This sequence belongs to the eukaryotic ribosomal protein eL24 family. Component of the large ribosomal subunit (LSU). Mature yeast ribosomes consist of a small (40S) and a large (60S) subunit. The 40S small subunit contains 1 molecule of ribosomal RNA (18S rRNA) and 33 different proteins (encoded by 57 genes). The large 60S subunit contains 3 rRNA molecules (25S, 5.8S and 5S rRNA) and 46 different proteins (encoded by 81 genes).

Its subcellular location is the cytoplasm. In terms of biological role, component of the ribosome, a large ribonucleoprotein complex responsible for the synthesis of proteins in the cell. The small ribosomal subunit (SSU) binds messenger RNAs (mRNAs) and translates the encoded message by selecting cognate aminoacyl-transfer RNA (tRNA) molecules. The large subunit (LSU) contains the ribosomal catalytic site termed the peptidyl transferase center (PTC), which catalyzes the formation of peptide bonds, thereby polymerizing the amino acids delivered by tRNAs into a polypeptide chain. The nascent polypeptides leave the ribosome through a tunnel in the LSU and interact with protein factors that function in enzymatic processing, targeting, and the membrane insertion of nascent chains at the exit of the ribosomal tunnel. The polypeptide is Large ribosomal subunit protein eL24A (Saccharomyces cerevisiae (strain ATCC 204508 / S288c) (Baker's yeast)).